The chain runs to 443 residues: Threonine/serine transporter TdcC (443 aa).

Transmembrane regions (helical) follow at residues 22-42, 44-64, 97-117, 140-160, 163-183, 207-227, 261-281, 311-331, 366-386, 389-409, and 423-443; these read TTWT…FFPI, AGFG…PIAF, GVVI…IYGV, FVAL…KDLM, VMSY…LSLI, ILIT…FSPI, MLMV…LSPA, FAIT…FKSF, ISMI…PNIL, IEAM…MYAI, and DNVF…YKLF.

This sequence belongs to the amino acid/polyamine transporter 2 family. SdaC/TdcC subfamily.

The protein resides in the cell inner membrane. It catalyses the reaction L-threonine(in) + H(+)(in) = L-threonine(out) + H(+)(out). The enzyme catalyses L-serine(in) + H(+)(in) = L-serine(out) + H(+)(out). Functionally, involved in the import of threonine and serine into the cell, with the concomitant import of a proton (symport system). This chain is Threonine/serine transporter TdcC, found in Shigella boydii serotype 18 (strain CDC 3083-94 / BS512).